The chain runs to 124 residues: Small ribosomal subunit protein uS12 (124 aa).

Residues 1 to 29 form a disordered region; sequence MATINQLVRKGRKRRVAKSNVPALEASPQ. 3-methylthioaspartic acid is present on D89. Positions 101–124 are disordered; the sequence is AADTAGVDKRRQGRSKYGAKRPKS. A compositionally biased stretch (basic residues) spans 111-124; the sequence is RQGRSKYGAKRPKS.

This sequence belongs to the universal ribosomal protein uS12 family. In terms of assembly, part of the 30S ribosomal subunit. Contacts proteins S8 and S17. May interact with IF1 in the 30S initiation complex.

Functionally, with S4 and S5 plays an important role in translational accuracy. Its function is as follows. Interacts with and stabilizes bases of the 16S rRNA that are involved in tRNA selection in the A site and with the mRNA backbone. Located at the interface of the 30S and 50S subunits, it traverses the body of the 30S subunit contacting proteins on the other side and probably holding the rRNA structure together. The combined cluster of proteins S8, S12 and S17 appears to hold together the shoulder and platform of the 30S subunit. This is Small ribosomal subunit protein uS12 from Alkalilimnicola ehrlichii (strain ATCC BAA-1101 / DSM 17681 / MLHE-1).